The sequence spans 131 residues: Large ribosomal subunit protein bL19 (131 aa).

It belongs to the bacterial ribosomal protein bL19 family.

Its function is as follows. This protein is located at the 30S-50S ribosomal subunit interface and may play a role in the structure and function of the aminoacyl-tRNA binding site. The sequence is that of Large ribosomal subunit protein bL19 from Rhodopseudomonas palustris (strain HaA2).